Consider the following 375-residue polypeptide: MGLLVFVRNLLLALCLFLVLGFLYYSAWKLHLLQWEEDSNSVVLSFDSAGQTLGSEYDRLGFLLNLDSKLPAELATKYANFSEGACKPGYASALMTAIFPRFSKPAPMFLDDSFRKWARIREFVPPFGIKGQDNLIKAILSVTKEYRLTPALDSLRCRRCIIVGNGGVLANKSLGSRIDDYDIVVRLNSAPVKGFEKDVGSKTTLRITYPEGAMQRPEQYERDSLFVLAGFKWQDFKWLKYIVYKERVSASDGFWKSVATRVPKEPPEIRILNPYFIQEAAFTLIGLPFNNGLMGRGNIPTLGSVAVTMALHGCDEVAVAGFGYDMSTPNAPLHYYETVRMAAIKESWTHNIQREKEFLRKLVKARVITDLSSGI.

The Cytoplasmic segment spans residues 1–8 (MGLLVFVR). Residues 9-28 (NLLLALCLFLVLGFLYYSAW) form a helical; Signal-anchor for type II membrane protein membrane-spanning segment. Residues 29 to 375 (KLHLLQWEED…RVITDLSSGI (347 aa)) lie on the Lumenal side of the membrane. Asn80 and Asn171 each carry an N-linked (GlcNAc...) asparagine glycan. Cys160 and Cys314 are joined by a disulfide.

This sequence belongs to the glycosyltransferase 29 family. In terms of processing, the soluble form derives from the membrane form by proteolytic processing. Highly expressed in adult skeletal muscle and in all fetal tissues examined and to a much lesser extent in placenta, lung and liver.

Its subcellular location is the golgi apparatus. It localises to the golgi stack membrane. The protein resides in the secreted. It catalyses the reaction a beta-D-galactosyl-(1-&gt;4)-N-acetyl-beta-D-glucosaminyl derivative + CMP-N-acetyl-beta-neuraminate = an N-acetyl-alpha-neuraminyl-(2-&gt;3)-beta-D-galactosyl-(1-&gt;4)-N-acetyl-beta-D-glucosaminyl derivative + CMP + H(+). The protein operates within protein modification; protein glycosylation. Its function is as follows. Catalyzes the formation of the NeuAc-alpha-2,3-Gal-beta-1,4-GlcNAc-, NeuAc-alpha-2,3-Gal-beta-1,3-GlcNAc- and NeuAc-alpha-2,3-Gal-beta-1,3-GalNAc- sequences found in terminal carbohydrate groups of glycoproteins and glycolipids. The highest activity is toward Gal-beta-1,3-GlcNAc and the lowest toward Gal-beta-1,3-GalNAc. The sequence is that of CMP-N-acetylneuraminate-beta-1,4-galactoside alpha-2,3-sialyltransferase (ST3GAL3) from Homo sapiens (Human).